The following is a 452-amino-acid chain: Elongation factor Tu, mitochondrial (452 aa).

Residues 1 to 43 constitute a mitochondrion transit peptide; that stretch reads MAAATLLRATPRFSGLCASPTPFLQGRLRPLKAPASPFLCRGL. In terms of domain architecture, tr-type G spans 55–251; that stretch reads KPHVNVGTIG…AVDTYIPVPT (197 aa). The G1 stretch occupies residues 64 to 71; it reads GHVDHGKT. Residues Asp67, Gly69, Lys70, Thr71, and Thr72 each coordinate GTP. Position 71 (Thr71) interacts with Mg(2+). Lys79 is modified (N6-acetyllysine). Lys88 carries the post-translational modification N6-acetyllysine; alternate. Lys88 carries the post-translational modification N6-succinyllysine; alternate. A G2 region spans residues 105–109; the sequence is GITIN. Residues 126-129 are G3; it reads DCPG. Asn181, Asp184, Ser219, Ala220, and Leu221 together coordinate GTP. Residues 181 to 184 form a G4 region; sequence NKAD. The G5 stretch occupies residues 219–221; the sequence is SAL. Residue Lys234 is modified to N6-succinyllysine. An N6-acetyllysine modification is found at Lys256. Thr278 carries the phosphothreonine modification. An N6-succinyllysine modification is found at Lys286. Ser312 carries the post-translational modification Phosphoserine. N6-acetyllysine occurs at positions 361 and 418.

Belongs to the TRAFAC class translation factor GTPase superfamily. Classic translation factor GTPase family. EF-Tu/EF-1A subfamily. As to quaternary structure, interacts with NLRX1. Interacts with ATG16L1.

Its subcellular location is the mitochondrion. It catalyses the reaction GTP + H2O = GDP + phosphate + H(+). GTP hydrolase that promotes the GTP-dependent binding of aminoacyl-tRNA to the A-site of ribosomes during protein biosynthesis. Also plays a role in the regulation of autophagy and innate immunity. Recruits ATG5-ATG12 and NLRX1 at mitochondria and serves as a checkpoint of the RIGI-MAVS pathway. In turn, inhibits RLR-mediated type I interferon while promoting autophagy. The polypeptide is Elongation factor Tu, mitochondrial (Tufm) (Mus musculus (Mouse)).